A 418-amino-acid polypeptide reads, in one-letter code: MREVVSLNVGQAGGQIANSCWELYCLEHGIQPDGYLTEERKAADPDQGFNTFFSETGQGKYVPRTIYCDLEPNVVDEVRTGPYRALFHPEQMITGKEDASNNYARGHYTVGKEMIDQCLDKVRRVADNCSGLQGFLVFHSFGGGQGSGFGALLMERLSVDYGKKTKLEFCVYPAPQNATSVVEPYNSILTTHTTLEHSDVQFMVDNEAIYDICRRNLGIERPSYENSNRLMAQGQSPITAIMLLFDCALNVDLNEFQTNLVPYPRIHFPLASYSPVVSAGKASHESNSVMEVTIVCFEPNNQMVKCDPRNGKYMATCLLYRGDVVPKDVHAVAATLKTKRTVQFVDLQPTGFKIGICYQPPTMVPNGDLAKVNRACMLSNTTAISEAWTALSHKFDLIYSKRAFVHWYVGEGMEEGEF.

Residues glutamine 11, glutamate 71, serine 140, glycine 144, threonine 179, asparagine 206, and asparagine 228 each coordinate GTP. A Mg(2+)-binding site is contributed by glutamate 71. Residue glutamate 255 is part of the active site.

The protein belongs to the tubulin family. In terms of assembly, dimer of alpha and beta chains. A typical microtubule is a hollow water-filled tube with an outer diameter of 25 nm and an inner diameter of 15 nM. Alpha-beta heterodimers associate head-to-tail to form protofilaments running lengthwise along the microtubule wall with the beta-tubulin subunit facing the microtubule plus end conferring a structural polarity. Microtubules usually have 13 protofilaments but different protofilament numbers can be found in some organisms and specialized cells. It depends on Mg(2+) as a cofactor.

Its subcellular location is the cytoplasm. The protein resides in the cytoskeleton. The enzyme catalyses GTP + H2O = GDP + phosphate + H(+). Functionally, tubulin is the major constituent of microtubules, a cylinder consisting of laterally associated linear protofilaments composed of alpha- and beta-tubulin heterodimers. Microtubules grow by the addition of GTP-tubulin dimers to the microtubule end, where a stabilizing cap forms. Below the cap, tubulin dimers are in GDP-bound state, owing to GTPase activity of alpha-tubulin. The protein is Tubulin alpha chain (TUB1) of Ajellomyces capsulatus (Darling's disease fungus).